Here is a 328-residue protein sequence, read N- to C-terminus: dTDP-4-dehydrorhamnose 3,5-epimerase (328 aa).

Substrate is bound by residues Arg23, Glu28, 46-48 (QEN), and Arg58. Catalysis depends on His61, which acts as the Proton acceptor. Positions 70 and 117 each coordinate substrate. Tyr130 (proton donor) is an active-site residue. Positions 141 and 166 each coordinate substrate.

It belongs to the dTDP-4-dehydrorhamnose 3,5-epimerase family. As to quaternary structure, homodimer.

The enzyme catalyses dTDP-4-dehydro-6-deoxy-alpha-D-glucose = dTDP-4-dehydro-beta-L-rhamnose. It participates in carbohydrate biosynthesis; dTDP-L-rhamnose biosynthesis. It functions in the pathway bacterial outer membrane biogenesis; LPS O-antigen biosynthesis. In terms of biological role, catalyzes the epimerization of the C3' and C5'positions of dTDP-6-deoxy-D-xylo-4-hexulose, forming dTDP-6-deoxy-L-lyxo-4-hexulose. This chain is dTDP-4-dehydrorhamnose 3,5-epimerase (rfbC), found in Neisseria gonorrhoeae.